Here is a 612-residue protein sequence, read N- to C-terminus: Sulfite reductase [NADPH] hemoprotein beta-component (612 aa).

Residues 1–26 are disordered; that stretch reads MDDHKPIETPDGPAVDTPGIGARRYE. Residues Cys-469, Cys-475, Cys-514, and Cys-518 each coordinate [4Fe-4S] cluster. Siroheme is bound at residue Cys-518.

Belongs to the nitrite and sulfite reductase 4Fe-4S domain family. As to quaternary structure, alpha(8)-beta(8). The alpha component is a flavoprotein, the beta component is a hemoprotein. Siroheme serves as cofactor. [4Fe-4S] cluster is required as a cofactor.

The catalysed reaction is hydrogen sulfide + 3 NADP(+) + 3 H2O = sulfite + 3 NADPH + 4 H(+). Its pathway is sulfur metabolism; hydrogen sulfide biosynthesis; hydrogen sulfide from sulfite (NADPH route): step 1/1. In terms of biological role, component of the sulfite reductase complex that catalyzes the 6-electron reduction of sulfite to sulfide. This is one of several activities required for the biosynthesis of L-cysteine from sulfate. This Methylorubrum extorquens (strain ATCC 14718 / DSM 1338 / JCM 2805 / NCIMB 9133 / AM1) (Methylobacterium extorquens) protein is Sulfite reductase [NADPH] hemoprotein beta-component.